Consider the following 394-residue polypeptide: NAD(P)H-quinone oxidoreductase subunit H (394 aa).

This sequence belongs to the complex I 49 kDa subunit family. In terms of assembly, NDH-1 can be composed of about 15 different subunits; different subcomplexes with different compositions have been identified which probably have different functions.

Its subcellular location is the cellular thylakoid membrane. It catalyses the reaction a plastoquinone + NADH + (n+1) H(+)(in) = a plastoquinol + NAD(+) + n H(+)(out). The catalysed reaction is a plastoquinone + NADPH + (n+1) H(+)(in) = a plastoquinol + NADP(+) + n H(+)(out). NDH-1 shuttles electrons from an unknown electron donor, via FMN and iron-sulfur (Fe-S) centers, to quinones in the respiratory and/or the photosynthetic chain. The immediate electron acceptor for the enzyme in this species is believed to be plastoquinone. Couples the redox reaction to proton translocation, and thus conserves the redox energy in a proton gradient. Cyanobacterial NDH-1 also plays a role in inorganic carbon-concentration. This Prochlorococcus marinus (strain MIT 9303) protein is NAD(P)H-quinone oxidoreductase subunit H.